The primary structure comprises 552 residues: DNA ligase (552 aa).

E244 contacts ATP. K246 serves as the catalytic N6-AMP-lysine intermediate. Residues R251, R266, E296, F336, R408, and K414 each coordinate ATP.

It belongs to the ATP-dependent DNA ligase family. Requires Mg(2+) as cofactor.

The enzyme catalyses ATP + (deoxyribonucleotide)n-3'-hydroxyl + 5'-phospho-(deoxyribonucleotide)m = (deoxyribonucleotide)n+m + AMP + diphosphate.. In terms of biological role, DNA ligase that seals nicks in double-stranded DNA during DNA replication, DNA recombination and DNA repair. This chain is DNA ligase, found in Methanothrix thermoacetophila (strain DSM 6194 / JCM 14653 / NBRC 101360 / PT) (Methanosaeta thermophila).